The following is a 73-amino-acid chain: Myosin-IB light chain (73 aa).

2 consecutive EF-hand domains span residues 3-38 and 38-73; these read DEKTQLIEAFYNFDGDYDGFVSVEEFRGIIRDGLPM and MTEAEITEFFEAADPNNTGFIDYKAFAAMLYSVDES. Ca(2+)-binding residues include Asp-16, Asp-18, Asp-20, and Glu-27.

Myosin I is a dimer of a heavy and a light chain. Inability to self-assemble into filaments. Interacts with myoB. Does not interact with myoC or myoD.

Functionally, functions as the light chain for myosin-B. Binds calcium with submicromolar affinity and may sense physiological calcium changes. This chain is Myosin-IB light chain (mlcB), found in Dictyostelium discoideum (Social amoeba).